Here is a 741-residue protein sequence, read N- to C-terminus: Transketolase, chloroplastic (741 aa).

Residues 1 to 67 (MASSSSLTLS…TKQQFSVRAS (67 aa)) constitute a chloroplast transit peptide. His-103 provides a ligand contact to substrate. Residues His-143 and 192–194 (GPL) each bind thiamine diphosphate. Asp-233 contacts Mg(2+). Thiamine diphosphate-binding residues include Gly-234 and Asn-263. Positions 263 and 265 each coordinate Mg(2+). Residues His-340, Arg-434, and Ser-461 each contribute to the substrate site. His-340 contacts thiamine diphosphate. The thiamine diphosphate site is built by Glu-488 and Phe-515. The Proton donor role is filled by Glu-488. Substrate-binding residues include His-539, Asp-547, and Arg-598.

It belongs to the transketolase family. In terms of assembly, homodimer. It depends on Mg(2+) as a cofactor. Ca(2+) serves as cofactor. Mn(2+) is required as a cofactor. The cofactor is Co(2+). Requires thiamine diphosphate as cofactor.

The protein localises to the plastid. It localises to the chloroplast thylakoid membrane. The enzyme catalyses D-sedoheptulose 7-phosphate + D-glyceraldehyde 3-phosphate = aldehydo-D-ribose 5-phosphate + D-xylulose 5-phosphate. It participates in carbohydrate biosynthesis; Calvin cycle. In terms of biological role, catalyzes the reversible transfer of a two-carbon ketol group from fructose-6-phosphate or sedoheptulose-7-phosphate to glyceraldehyde-3-phosphate to yield xylulose-5-phosphate and erythrose-4-phosphate or ribose-5-phosphate, respectively. This chain is Transketolase, chloroplastic, found in Solanum tuberosum (Potato).